Here is a 157-residue protein sequence, read N- to C-terminus: SsrA-binding protein (157 aa).

The protein belongs to the SmpB family.

The protein resides in the cytoplasm. Required for rescue of stalled ribosomes mediated by trans-translation. Binds to transfer-messenger RNA (tmRNA), required for stable association of tmRNA with ribosomes. tmRNA and SmpB together mimic tRNA shape, replacing the anticodon stem-loop with SmpB. tmRNA is encoded by the ssrA gene; the 2 termini fold to resemble tRNA(Ala) and it encodes a 'tag peptide', a short internal open reading frame. During trans-translation Ala-aminoacylated tmRNA acts like a tRNA, entering the A-site of stalled ribosomes, displacing the stalled mRNA. The ribosome then switches to translate the ORF on the tmRNA; the nascent peptide is terminated with the 'tag peptide' encoded by the tmRNA and targeted for degradation. The ribosome is freed to recommence translation, which seems to be the essential function of trans-translation. The polypeptide is SsrA-binding protein (Chlorobium luteolum (strain DSM 273 / BCRC 81028 / 2530) (Pelodictyon luteolum)).